Reading from the N-terminus, the 273-residue chain is Formamidopyrimidine-DNA glycosylase (273 aa).

The active-site Schiff-base intermediate with DNA is the P2. E3 serves as the catalytic Proton donor. K58 serves as the catalytic Proton donor; for beta-elimination activity. The DNA site is built by H91 and R110. The FPG-type zinc finger occupies 238 to 272; it reads QVYGKTGQPCPRCASMIVKIKLGGRGTHLCPHCQK. Residue R262 is the Proton donor; for delta-elimination activity of the active site.

It belongs to the FPG family. As to quaternary structure, monomer. Requires Zn(2+) as cofactor.

The enzyme catalyses Hydrolysis of DNA containing ring-opened 7-methylguanine residues, releasing 2,6-diamino-4-hydroxy-5-(N-methyl)formamidopyrimidine.. It carries out the reaction 2'-deoxyribonucleotide-(2'-deoxyribose 5'-phosphate)-2'-deoxyribonucleotide-DNA = a 3'-end 2'-deoxyribonucleotide-(2,3-dehydro-2,3-deoxyribose 5'-phosphate)-DNA + a 5'-end 5'-phospho-2'-deoxyribonucleoside-DNA + H(+). Involved in base excision repair of DNA damaged by oxidation or by mutagenic agents. Acts as a DNA glycosylase that recognizes and removes damaged bases. Has a preference for oxidized purines, such as 7,8-dihydro-8-oxoguanine (8-oxoG). Has AP (apurinic/apyrimidinic) lyase activity and introduces nicks in the DNA strand. Cleaves the DNA backbone by beta-delta elimination to generate a single-strand break at the site of the removed base with both 3'- and 5'-phosphates. The protein is Formamidopyrimidine-DNA glycosylase of Streptococcus thermophilus (strain CNRZ 1066).